The following is a 125-amino-acid chain: Small ribosomal subunit protein uS12 (125 aa).

Asp89 is subject to 3-methylthioaspartic acid. The segment at 106–125 (GVKDRKQSRSKYGAKRPKKA) is disordered. The segment covering 113 to 125 (SRSKYGAKRPKKA) has biased composition (basic residues).

Belongs to the universal ribosomal protein uS12 family. Part of the 30S ribosomal subunit. Contacts proteins S8 and S17. May interact with IF1 in the 30S initiation complex.

Functionally, with S4 and S5 plays an important role in translational accuracy. Interacts with and stabilizes bases of the 16S rRNA that are involved in tRNA selection in the A site and with the mRNA backbone. Located at the interface of the 30S and 50S subunits, it traverses the body of the 30S subunit contacting proteins on the other side and probably holding the rRNA structure together. The combined cluster of proteins S8, S12 and S17 appears to hold together the shoulder and platform of the 30S subunit. The chain is Small ribosomal subunit protein uS12 from Aromatoleum aromaticum (strain DSM 19018 / LMG 30748 / EbN1) (Azoarcus sp. (strain EbN1)).